A 438-amino-acid polypeptide reads, in one-letter code: CBL-interacting protein kinase 32 (438 aa).

The 256-residue stretch at 13–268 folds into the Protein kinase domain; sequence YELGRTIGEG…IPEILEDEWF (256 aa). Residues 19 to 27 and K42 each bind ATP; that span reads IGEGTFAKV. D136 functions as the Proton acceptor in the catalytic mechanism. Residues 154–183 are activation loop; sequence DFGLSALSQQIKDDGLLHTTCGTPNYVAPE. Residues 305-329 enclose the NAF domain; that stretch reads EEPEALNAFELISMSAGLNLGNLFD. Positions 335 to 364 are PPI; it reads KRETRFTSKCPPKEIVRKIEEAAKPLGFDV.

This sequence belongs to the protein kinase superfamily. CAMK Ser/Thr protein kinase family. SNF1 subfamily. Mn(2+) is required as a cofactor.

The catalysed reaction is L-seryl-[protein] + ATP = O-phospho-L-seryl-[protein] + ADP + H(+). It carries out the reaction L-threonyl-[protein] + ATP = O-phospho-L-threonyl-[protein] + ADP + H(+). In terms of biological role, CIPK serine-threonine protein kinases interact with CBL proteins. Binding of a CBL protein to the regulatory NAF domain of CIPK protein lead to the activation of the kinase in a calcium-dependent manner. The chain is CBL-interacting protein kinase 32 (CIPK32) from Oryza sativa subsp. japonica (Rice).